The chain runs to 100 residues: Small ribosomal subunit protein bS20 (100 aa).

The segment covering 1–20 (MASGKPKKKNPRLASGRKRV) has biased composition (basic residues). The tract at residues 1 to 21 (MASGKPKKKNPRLASGRKRVR) is disordered.

The protein belongs to the bacterial ribosomal protein bS20 family.

Binds directly to 16S ribosomal RNA. The sequence is that of Small ribosomal subunit protein bS20 from Albidiferax ferrireducens (strain ATCC BAA-621 / DSM 15236 / T118) (Rhodoferax ferrireducens).